Here is a 156-residue protein sequence, read N- to C-terminus: UPF0336 protein SACE_6876 (156 aa).

The 121-residue stretch at 8 to 128 folds into the MaoC-like domain; that stretch reads IGREYPPTPA…DFLTVRAEIT (121 aa).

Belongs to the UPF0336 family.

In Saccharopolyspora erythraea (strain ATCC 11635 / DSM 40517 / JCM 4748 / NBRC 13426 / NCIMB 8594 / NRRL 2338), this protein is UPF0336 protein SACE_6876.